Reading from the N-terminus, the 242-residue chain is Floral homeotic protein AGAMOUS (242 aa).

The MADS-box domain maps to 19 to 73 (RGKIEIKRIENTTNRQVTFCKRRNGLLKKAYELSVLCDAEVALIVFSSRGRLYEY). The K-box domain maps to 103-193 (AQYYQQEASK…RAKIAETERS (91 aa)).

In terms of tissue distribution, expressed exclusively in stamens and carpels.

The protein resides in the nucleus. Its function is as follows. Probable transcription factor involved in regulating genes that determines stamen and carpel development in wild-type flowers. In Petunia hybrida (Petunia), this protein is Floral homeotic protein AGAMOUS (AG1).